The following is a 254-amino-acid chain: Peptide methionine sulfoxide reductase A5 (254 aa).

Positions 1-26 are cleaved as a signal peptide; that stretch reads MARGSAAAAIAGVVWVLLLLVGVASG.

It belongs to the MsrA Met sulfoxide reductase family.

It carries out the reaction L-methionyl-[protein] + [thioredoxin]-disulfide + H2O = L-methionyl-(S)-S-oxide-[protein] + [thioredoxin]-dithiol. The catalysed reaction is [thioredoxin]-disulfide + L-methionine + H2O = L-methionine (S)-S-oxide + [thioredoxin]-dithiol. In terms of biological role, catalyzes the reduction of methionine sulfoxide (MetSO) to methionine in proteins. Plays a protective role against oxidative stress by restoring activity to proteins that have been inactivated by methionine oxidation. MSRA family specifically reduces the MetSO S-enantiomer. This is Peptide methionine sulfoxide reductase A5 (MSRA5) from Oryza sativa subsp. japonica (Rice).